Consider the following 356-residue polypeptide: MNNLKKNDKEVLEEFANLFPILLNEIKKELEKIDFPKESIHWIETVIKANSTGGKMNRGISVLESLESLNEGRALTRHEIFQAQTLGWCVEIFQACYLVSDDIMDQSLKRRGKPCWYKQKRPNSDQEVGLAAINDSFIIESCVFILLEKYFKNESYYLNIVELFHKTGFQTQLGQLLDLTTQPIRGDFSSINLKNHTRITEYKTAYYSFFFPVALAMLMSKINHEQAFTTAKDILLPMGVYFQVQDDFLDCYGSPEVFGKIGRDIEENKCSWMICQAILNGTPDQINLLKKHYGFDNPTDVEIVKKIYKEINLEKIFKDYENTSYNFLIDKIKTTCIYLPPSVFLKILSKIYKRDK.

Positions 55, 58, and 94 each coordinate isopentenyl diphosphate. Mg(2+)-binding residues include D101 and D105. R110 contributes to the dimethylallyl diphosphate binding site. R111 provides a ligand contact to isopentenyl diphosphate. Dimethylallyl diphosphate-binding residues include K203, T204, Q243, K260, and K269.

The protein belongs to the FPP/GGPP synthase family. Mg(2+) is required as a cofactor.

The protein resides in the cytoplasm. The catalysed reaction is isopentenyl diphosphate + dimethylallyl diphosphate = (2E)-geranyl diphosphate + diphosphate. It carries out the reaction isopentenyl diphosphate + (2E)-geranyl diphosphate = (2E,6E)-farnesyl diphosphate + diphosphate. It participates in isoprenoid biosynthesis; farnesyl diphosphate biosynthesis; farnesyl diphosphate from geranyl diphosphate and isopentenyl diphosphate: step 1/1. Its pathway is isoprenoid biosynthesis; geranyl diphosphate biosynthesis; geranyl diphosphate from dimethylallyl diphosphate and isopentenyl diphosphate: step 1/1. With respect to regulation, inhibited by aminobisphosphonate drugs (aBP), such as risedronate and alendronate. Key enzyme in isoprenoid biosynthesis which catalyzes the formation of farnesyl diphosphate (FPP), a sterol precursor. This chain is Probable farnesyl diphosphate synthase DDB_G0278823, found in Dictyostelium discoideum (Social amoeba).